A 676-amino-acid polypeptide reads, in one-letter code: E3 ubiquitin-protein ligase ICP0 (676 aa).

The segment at 13–52 adopts an RING-type zinc-finger fold; the sequence is CCICLDAITGAARALPCLHAFCLACIRRWLEGRPTCPLCK. Disordered regions lie at residues 101 to 153, 266 to 517, and 555 to 676; these read DLTA…GGRA, HLIP…AGAQ, and AAIS…AWRQ. Gly residues predominate over residues 123 to 153; it reads EAGGGAGGAEEAGEARGAGAGRAAGAAGGRA. The span at 286 to 303 shows a compositional bias: acidic residues; sequence SDSDSEGSEDDSWSESEE. Residues 304–314 are compositionally biased toward low complexity; sequence SSSGLSTSDLT. Acidic residues predominate over residues 315–328; the sequence is AIDDTETEPETDAE. A compositionally biased stretch (polar residues) spans 351–361; it reads YVSTRGRQTPA. Low complexity-rich tracts occupy residues 375–388 and 397–411; these read GRAA…SSRS and LPAA…QARA. Positions 422–439 are enriched in gly residues; sequence GAGLGVAAGETAGWGAGS. Residues 440-450 show a composition bias toward basic and acidic residues; sequence EEGRGERRARL. A compositionally biased stretch (pro residues) spans 474 to 484; it reads TPAPAPAPAPA. A compositionally biased stretch (low complexity) spans 555–597; sequence AAISTRAPTPSPAGRAPAADPRRAGAPALAGAARAEVGRNGNP.

This sequence belongs to the simplexviruses ICp0 family. Auto-ubiquitinated. In terms of processing, transactivation activity is possibly regulated through phosphorylation by casein kinase II.

The enzyme catalyses S-ubiquitinyl-[E2 ubiquitin-conjugating enzyme]-L-cysteine + [acceptor protein]-L-lysine = [E2 ubiquitin-conjugating enzyme]-L-cysteine + N(6)-ubiquitinyl-[acceptor protein]-L-lysine.. Its function is as follows. Evades nuclear antiviral defenses triggered by dsDNA viruses. Acts during the initial stages of lytic infection and the reactivation of latent viral genome. Prevents the antiviral effect of nuclear bodies by degrading host PML and SP100. The chain is E3 ubiquitin-protein ligase ICP0 (BICP0) from Bovine herpesvirus 1.1 (strain Cooper) (BoHV-1).